The primary structure comprises 162 residues: tRNA-specific adenosine deaminase (162 aa).

The region spanning 3-115 (DSDKYFMKCA…KNLQKYICCK (113 aa)) is the CMP/dCMP-type deaminase domain. His54 contributes to the Zn(2+) binding site. The Proton donor role is filled by Glu56. Zn(2+) is bound by residues Cys84 and Cys87.

This sequence belongs to the cytidine and deoxycytidylate deaminase family. As to quaternary structure, homodimer. Requires Zn(2+) as cofactor.

The enzyme catalyses adenosine(34) in tRNA + H2O + H(+) = inosine(34) in tRNA + NH4(+). In terms of biological role, catalyzes the deamination of adenosine to inosine at the wobble position 34 of tRNA(Arg2). This Buchnera aphidicola subsp. Baizongia pistaciae (strain Bp) protein is tRNA-specific adenosine deaminase.